The following is a 349-amino-acid chain: Early nodulin-like protein 2 (349 aa).

Positions 1–28 are cleaved as a signal peptide; it reads MTFLKMKSLSFFFTILLSLSTLFTISNA. A Phytocyanin domain is found at 29 to 130; sequence RKFNVGGSGA…GQKLNVVVIS (102 aa). Residues C84 and C118 are joined by a disulfide bond. The tract at residues 136–330 is disordered; sequence TAQSPHAAAP…GQKKSSANGM (195 aa). 2 stretches are compositionally biased toward low complexity: residues 145 to 201 and 224 to 234; these read PGSS…SPPG and TSPVSPSSAPM. A compositionally biased stretch (polar residues) spans 249-260; sequence IPPSSAPMTSPP. Over residues 263 to 312 the composition is skewed to low complexity; sequence MAPKSSSPVSNSPTVSPSLAPGGSTSSSPSDSPSGSAMGPSGDGPSAAGD. A lipid anchor (GPI-anchor amidated serine) is attached at S325. The propeptide at 326–349 is removed in mature form; sequence SANGMTVMSITTVLSLVLTIFLSA.

Belongs to the early nodulin-like (ENODL) family. In terms of tissue distribution, mostly expressed in leaves and roots, and, to a lower extent, in seedlings, stems and flowers, but barely in seeds.

The protein localises to the cell membrane. In terms of biological role, may act as a carbohydrate transporter. The protein is Early nodulin-like protein 2 of Arabidopsis thaliana (Mouse-ear cress).